The chain runs to 435 residues: Protein CHLOROPLAST IMPORT APPARATUS 2 (435 aa).

A chloroplast-targeting transit peptide spans 1–59 (MSACLSSGGGGAAAYSFELEKVKSPPPSSSTTTTRATSPSSTISESSNSPLAISTRKPR). 2 disordered regions span residues 21–66 (KVKS…KRPN) and 412–435 (ADQR…SGQR). A compositionally biased stretch (low complexity) spans 29-49 (SSTTTTRATSPSSTISESSNS). A compositionally biased stretch (basic residues) spans 56–65 (RKPRTQRKRP). Residues 383-425 (REASVLRYKEKRRTRLFSKKIRYQVRKLNADQRPRMKGRFVRR) form the CCT domain.

As to expression, expressed in leaves and young flower buds.

The protein resides in the plastid. The protein localises to the chloroplast. It localises to the nucleus. Responsible for specific up-regulation of the translocon genes TOC33 and TOC75 in leaves. Involved in the general chloroplast protein import pathway regulation, including protein import and protein translation efficiencies. The polypeptide is Protein CHLOROPLAST IMPORT APPARATUS 2 (CIA2) (Arabidopsis thaliana (Mouse-ear cress)).